Consider the following 116-residue polypeptide: Calcium-regulated OB-fold protein CarO (116 aa).

Residues 1–21 (MKLRHLPLIAAIGLFSTVTLA) form the signal peptide.

Its subcellular location is the periplasm. Its function is as follows. Plays a role in intracellular Ca(2+) homeostasis. Involved in cell protection against oxidative stress in strain 25W. In Pseudomonas aeruginosa (strain ATCC 15692 / DSM 22644 / CIP 104116 / JCM 14847 / LMG 12228 / 1C / PRS 101 / PAO1), this protein is Calcium-regulated OB-fold protein CarO.